A 214-amino-acid polypeptide reads, in one-letter code: Orotidine 5'-phosphate decarboxylase (214 aa).

Residues D11, K33, 59–68 (DFKIADIPNT), S114, 164–174 (PGIGSQGGRAS), G187, and R188 contribute to the substrate site. Residue K61 is the Proton donor of the active site.

This sequence belongs to the OMP decarboxylase family. Type 1 subfamily. Homodimer.

It carries out the reaction orotidine 5'-phosphate + H(+) = UMP + CO2. It functions in the pathway pyrimidine metabolism; UMP biosynthesis via de novo pathway; UMP from orotate: step 2/2. Its function is as follows. Catalyzes the decarboxylation of orotidine 5'-monophosphate (OMP) to uridine 5'-monophosphate (UMP). This is Orotidine 5'-phosphate decarboxylase from Thermoplasma acidophilum (strain ATCC 25905 / DSM 1728 / JCM 9062 / NBRC 15155 / AMRC-C165).